The primary structure comprises 532 residues: Spore germination protein 270-11 (532 aa).

2 disordered regions span residues 113–225 and 328–436; these read TTTS…GYGS and LSPT…TTGT. Over residues 329–426 the composition is skewed to low complexity; sequence SPTCSDSSSP…GSGSSSETQP (98 aa). 13 tandem repeats follow at residues 339-342, 343-346, 347-350, 351-354, 355-358, 359-362, 363-366, 367-370, 371-374, 375-378, 397-400, 401-404, and 405-408. A 10 X 4 AA tandem repeats of T-[EP]-T-[EP] region spans residues 339-378; sequence TPTPTETPTETPTETPTETPTETPTETPTETPTETETPTP. The interval 397–408 is 3 X 4 AA tandem repeats of T-[EP]-T-[PD]; sequence TPTPTETDTPTP.

This Dictyostelium discoideum (Social amoeba) protein is Spore germination protein 270-11 (celB).